The sequence spans 169 residues: MPFANEGNDPIAARLSKCYWNLSSPFLKDVIPKKRPSKAFNRKPPTKLESEEEEYHKFERGLHISDLGPKLKETDGQPKLKFELADDYKSSKHCICMRSNTAYECERCHQYFYGRLAQICDLHPNEFFLMDFRNCPFCKAPIEMIKKSPISWETIRKIEEAELPSDGDL.

The residue at position 165 (serine 165) is a Phosphoserine.

This is an uncharacterized protein from Drosophila melanogaster (Fruit fly).